Consider the following 186-residue polypeptide: uncharacterized protein (186 aa).

The signal sequence occupies residues 1–28 (MSVKPAALFRISAALAVAGLGASLIASA).

This is an uncharacterized protein from Rhizobium meliloti (strain 1021) (Ensifer meliloti).